A 145-amino-acid chain; its full sequence is Bacilliredoxin GK2368 (145 aa).

Belongs to the bacilliredoxin family.

This chain is Bacilliredoxin GK2368, found in Geobacillus kaustophilus (strain HTA426).